The primary structure comprises 458 residues: Retinoic acid receptor RXR-beta (458 aa).

Residues 1 to 17 show a composition bias toward basic and acidic residues; it reads GEAGRDGMGDTGRDSRS. Residues 1 to 105 form a disordered region; the sequence is GEAGRDGMGD…GGSGPPEDVK (105 aa). Positions 1–129 are modulating; sequence GEAGRDGMGD…PGGPGAGKRL (129 aa). A compositionally biased stretch (low complexity) spans 18 to 31; the sequence is PDSSSPNPLSQGIP. Over residues 32–56 the composition is skewed to pro residues; sequence PSSPPGPPHTPSAPPPPMPPPPLGS. Positions 57 to 68 are enriched in low complexity; that stretch reads PFPVISSSMGSP. The segment covering 69 to 78 has biased composition (pro residues); sequence GLPPPAPPGF. 2 consecutive NR C4-type zinc fingers follow at residues 130 to 150 and 166 to 190; these read CAIC…CEGC and CRDN…YQKC. Positions 130–195 form a DNA-binding region, nuclear receptor; sequence CAICGDRSSG…RYQKCLATGM (66 aa). A hinge region spans residues 196 to 220; the sequence is KREAVQEERQRGKDKDGDGDGAGGA. Residues 201 to 213 show a composition bias toward basic and acidic residues; sequence QEERQRGKDKDGD. Disordered regions lie at residues 201 to 223 and 238 to 261; these read QEER…APEE and QKSD…NDPV. The NR LBD domain maps to 221–454; the sequence is PEEMPVDRIL…TFLMEMLEAP (234 aa). Residues 245–255 show a composition bias toward gly residues; that stretch reads EGPGATGGGGS.

The protein belongs to the nuclear hormone receptor family. NR2 subfamily. Homodimer (in vitro). Heterodimer with other retinoic acid receptor family members. Binds DNA preferentially as a RAR/RXR heterodimer. Interacts with NR1H3. Interacts with AKAP13. Expressed in the adrenal gland with main expression in the zona fasciculata (at protein level).

It is found in the nucleus. The protein localises to the cytoplasm. Functionally, receptor for retinoic acid. Retinoic acid receptors bind as heterodimers to their target response elements in response to their ligands, all-trans or 9-cis retinoic acid, and regulate gene expression in various biological processes. The RAR/RXR heterodimers bind to the retinoic acid response elements (RARE). The protein is Retinoic acid receptor RXR-beta (Rxrb) of Rattus norvegicus (Rat).